A 684-amino-acid chain; its full sequence is DNA-directed RNA polymerase subunit beta' (684 aa).

Cys-69, Cys-71, Cys-87, and Cys-90 together coordinate Zn(2+). 3 residues coordinate Mg(2+): Asp-489, Asp-491, and Asp-493.

It belongs to the RNA polymerase beta' chain family. RpoC1 subfamily. In plastids the minimal PEP RNA polymerase catalytic core is composed of four subunits: alpha, beta, beta', and beta''. When a (nuclear-encoded) sigma factor is associated with the core the holoenzyme is formed, which can initiate transcription. It depends on Mg(2+) as a cofactor. The cofactor is Zn(2+).

It is found in the plastid. Its subcellular location is the chloroplast. It catalyses the reaction RNA(n) + a ribonucleoside 5'-triphosphate = RNA(n+1) + diphosphate. Functionally, DNA-dependent RNA polymerase catalyzes the transcription of DNA into RNA using the four ribonucleoside triphosphates as substrates. This Marchantia polymorpha (Common liverwort) protein is DNA-directed RNA polymerase subunit beta'.